We begin with the raw amino-acid sequence, 469 residues long: Siroheme synthase (469 aa).

The tract at residues 1–203 (MDYLPIFTDL…GQEQDAKQEL (203 aa)) is precorrin-2 dehydrogenase /sirohydrochlorin ferrochelatase. Residues 22 to 23 (DV) and 43 to 44 (PV) contribute to the NAD(+) site. Residue Ser128 is modified to Phosphoserine. Residues 214–469 (GQVALIGSGP…LQQSAVVKLA (256 aa)) are uroporphyrinogen-III C-methyltransferase. Pro223 is a binding site for S-adenosyl-L-methionine. Asp246 serves as the catalytic Proton acceptor. Lys268 functions as the Proton donor in the catalytic mechanism. Residues 299–301 (GGD), Val304, 329–330 (TA), Met381, and Gly410 each bind S-adenosyl-L-methionine.

The protein in the N-terminal section; belongs to the precorrin-2 dehydrogenase / sirohydrochlorin ferrochelatase family. In the C-terminal section; belongs to the precorrin methyltransferase family.

It catalyses the reaction uroporphyrinogen III + 2 S-adenosyl-L-methionine = precorrin-2 + 2 S-adenosyl-L-homocysteine + H(+). The catalysed reaction is precorrin-2 + NAD(+) = sirohydrochlorin + NADH + 2 H(+). The enzyme catalyses siroheme + 2 H(+) = sirohydrochlorin + Fe(2+). It functions in the pathway cofactor biosynthesis; adenosylcobalamin biosynthesis; precorrin-2 from uroporphyrinogen III: step 1/1. It participates in cofactor biosynthesis; adenosylcobalamin biosynthesis; sirohydrochlorin from precorrin-2: step 1/1. The protein operates within porphyrin-containing compound metabolism; siroheme biosynthesis; precorrin-2 from uroporphyrinogen III: step 1/1. Its pathway is porphyrin-containing compound metabolism; siroheme biosynthesis; siroheme from sirohydrochlorin: step 1/1. It functions in the pathway porphyrin-containing compound metabolism; siroheme biosynthesis; sirohydrochlorin from precorrin-2: step 1/1. Its function is as follows. Multifunctional enzyme that catalyzes the SAM-dependent methylations of uroporphyrinogen III at position C-2 and C-7 to form precorrin-2 via precorrin-1. Then it catalyzes the NAD-dependent ring dehydrogenation of precorrin-2 to yield sirohydrochlorin. Finally, it catalyzes the ferrochelation of sirohydrochlorin to yield siroheme. This Photobacterium profundum (strain SS9) protein is Siroheme synthase.